The following is a 358-amino-acid chain: MGILDIVPTGVITGDNVLKLFTYAREHGFAIPAINVTSSSTAIAALEAAREARSPIILQTSNGGAHFFAGKESSNEGQKASIAGSIAAAHYIRSIAPFFGVPVVMHSDHCAKKLLPWMDGMFEADEAYFKIHGEPLFSSHMLDLSEEPKKENIAQVKEYCKRAVPMKIWIEMEIGITGGEEDGVDNSHVSHTELYTQPEDIWDVYRELSSVTPYFSIAAAFGNVHGVYKPGNVKLQPALLGQHQAYVKEQLKTTNDKPVFFVFHGGSGSSVNEFRTGIKCGVVKVNIDTDTQFAYVEGVRDYVLKYKDYLMTPVGNPEGADKPNKKKFDPRVWIHEGEKTMTKRVLTALEDFYTVNTL.

S61 contacts D-glyceraldehyde 3-phosphate. The Proton donor role is filled by D108. H109, D143, E173, and H225 together coordinate Zn(2+). G226 contributes to the dihydroxyacetone phosphate binding site. H264 is a Zn(2+) binding site. Residues 265–267 (GGS) and 286–289 (NIDT) each bind dihydroxyacetone phosphate. T289, T312, T340, and T342 each carry phosphothreonine.

Belongs to the class II fructose-bisphosphate aldolase family. In terms of assembly, homodimer. Requires Zn(2+) as cofactor.

The enzyme catalyses beta-D-fructose 1,6-bisphosphate = D-glyceraldehyde 3-phosphate + dihydroxyacetone phosphate. It functions in the pathway carbohydrate degradation; glycolysis; D-glyceraldehyde 3-phosphate and glycerone phosphate from D-glucose: step 4/4. In terms of biological role, catalyzes the aldol condensation of dihydroxyacetone phosphate (DHAP or glycerone-phosphate) with glyceraldehyde 3-phosphate (G3P) to form fructose 1,6-bisphosphate (FBP) in gluconeogenesis and the reverse reaction in glycolysis. This chain is Fructose-bisphosphate aldolase (fba1), found in Schizosaccharomyces pombe (strain 972 / ATCC 24843) (Fission yeast).